Here is a 147-residue protein sequence, read N- to C-terminus: NADH-quinone oxidoreductase subunit A (147 aa).

3 helical membrane passes run 16–36, 68–88, and 98–118; these read FAIF…GGWF, FYLV…LFAW, and VGFV…VYLV.

This sequence belongs to the complex I subunit 3 family. As to quaternary structure, NDH-1 is composed of 13 different subunits. Subunits NuoA, H, J, K, L, M, N constitute the membrane sector of the complex.

Its subcellular location is the cell inner membrane. It carries out the reaction a quinone + NADH + 5 H(+)(in) = a quinol + NAD(+) + 4 H(+)(out). NDH-1 shuttles electrons from NADH, via FMN and iron-sulfur (Fe-S) centers, to quinones in the respiratory chain. The immediate electron acceptor for the enzyme in this species is believed to be ubiquinone. Couples the redox reaction to proton translocation (for every two electrons transferred, four hydrogen ions are translocated across the cytoplasmic membrane), and thus conserves the redox energy in a proton gradient. This Citrobacter koseri (strain ATCC BAA-895 / CDC 4225-83 / SGSC4696) protein is NADH-quinone oxidoreductase subunit A.